The primary structure comprises 269 residues: 4-hydroxy-tetrahydrodipicolinate reductase (269 aa).

An NAD(+)-binding site is contributed by 11 to 16 (GPIGRM). Residue Lys39 coordinates NADP(+). Residues 101 to 103 (GTT) and 125 to 128 (ASNF) contribute to the NAD(+) site. Residue His158 is the Proton donor/acceptor of the active site. His159 provides a ligand contact to (S)-2,3,4,5-tetrahydrodipicolinate. Lys162 (proton donor) is an active-site residue. 168–169 (GT) serves as a coordination point for (S)-2,3,4,5-tetrahydrodipicolinate.

It belongs to the DapB family. Homotetramer.

It is found in the cytoplasm. The catalysed reaction is (S)-2,3,4,5-tetrahydrodipicolinate + NAD(+) + H2O = (2S,4S)-4-hydroxy-2,3,4,5-tetrahydrodipicolinate + NADH + H(+). It carries out the reaction (S)-2,3,4,5-tetrahydrodipicolinate + NADP(+) + H2O = (2S,4S)-4-hydroxy-2,3,4,5-tetrahydrodipicolinate + NADPH + H(+). The protein operates within amino-acid biosynthesis; L-lysine biosynthesis via DAP pathway; (S)-tetrahydrodipicolinate from L-aspartate: step 4/4. Its function is as follows. Catalyzes the conversion of 4-hydroxy-tetrahydrodipicolinate (HTPA) to tetrahydrodipicolinate. This is 4-hydroxy-tetrahydrodipicolinate reductase from Buchnera aphidicola subsp. Acyrthosiphon pisum (strain APS) (Acyrthosiphon pisum symbiotic bacterium).